Reading from the N-terminus, the 188-residue chain is UPF0301 protein PsycPRwf_0144 (188 aa).

It belongs to the UPF0301 (AlgH) family.

The chain is UPF0301 protein PsycPRwf_0144 from Psychrobacter sp. (strain PRwf-1).